The following is a 102-amino-acid chain: uncharacterized protein (102 aa).

Residues 36–55 traverse the membrane as a helical segment; the sequence is IISLLAIFIKMCLWLWKQFL.

The protein resides in the membrane. This is an uncharacterized protein from Homo sapiens (Human).